The sequence spans 443 residues: Cyclin-A2-1 (443 aa).

Basic residues predominate over residues M1–N10. A disordered region spans residues M1–R61. Over residues A11–N25 the composition is skewed to basic and acidic residues.

Belongs to the cyclin family. Cyclin AB subfamily. As to expression, expressed in tissues with active cell division: apical root and shoot meristems, lateral root and leaf primordia, floral meristems and developing pollen.

Functionally, may negatively regulate endocycles and act as a regulator of ploidy levels in endoreduplication. The protein is Cyclin-A2-1 (CYCA2-1) of Arabidopsis thaliana (Mouse-ear cress).